Reading from the N-terminus, the 683-residue chain is Rhophilin-2-B (683 aa).

The REM-1 domain maps to 25–99; sequence KSIAQTGRSK…LERLNISVEV (75 aa). The BRO1 domain occupies 110-501; sequence PLIPLGLKET…TDIFQRLGPL (392 aa). The region spanning 515–592 is the PDZ domain; that stretch reads KMCITKEDGD…DSIEIQVISI (78 aa).

Belongs to the RHPN family. Interacts with RhoA.

It is found in the cytoplasm. Its subcellular location is the perinuclear region. In terms of biological role, binds specifically to GTP-Rho. In Xenopus laevis (African clawed frog), this protein is Rhophilin-2-B (rhpn2-b).